A 507-amino-acid chain; its full sequence is Keratin, type II cuticular Hb5 (507 aa).

Residues Met-1–Glu-123 form a head region. Residues Glu-123–Leu-434 enclose the IF rod domain. The tract at residues Lys-124 to Tyr-158 is coil 1A. The linker 1 stretch occupies residues Gln-159 to Leu-168. A coil 1B region spans residues Glu-169–Ala-269. Lys-229 is covalently cross-linked (Glycyl lysine isopeptide (Lys-Gly) (interchain with G-Cter in SUMO1)). The interval His-270–Leu-286 is linker 12. The coil 2 stretch occupies residues Asn-287–Glu-430. A tail region spans residues Glu-431–Ala-507.

The protein belongs to the intermediate filament family. Heterotetramer of two type I and two type II keratins.

This Mus musculus (Mouse) protein is Keratin, type II cuticular Hb5 (Krt85).